The primary structure comprises 149 residues: Large ribosomal subunit protein uL15 (149 aa).

The segment at 21 to 54 (RGSASGLGCTSGKGNKGQNARSGGGVRPGFEGGQ) is disordered. Gly residues-rich tracts occupy residues 23–35 (SASG…GKGN) and 42–52 (SGGGVRPGFEG).

This sequence belongs to the universal ribosomal protein uL15 family. Part of the 50S ribosomal subunit.

Its function is as follows. Binds to the 23S rRNA. The polypeptide is Large ribosomal subunit protein uL15 (Lawsonia intracellularis (strain PHE/MN1-00)).